An 890-amino-acid chain; its full sequence is Translation initiation factor IF-2 (890 aa).

The disordered stretch occupies residues L45 to Q304. A compositionally biased stretch (polar residues) spans S67–V81. Basic and acidic residues predominate over residues V92–D217. Basic residues predominate over residues G252–N266. The span at K267 to A280 shows a compositional bias: basic and acidic residues. The tr-type G domain maps to P389–K558. The interval G398–T405 is G1. G398 to T405 serves as a coordination point for GTP. The segment at G423 to H427 is G2. The segment at D444–G447 is G3. GTP is bound by residues D444 to H448 and N498 to D501. Residues N498–D501 are G4. The tract at residues S534 to K536 is G5. N6-acetyllysine is present on K808.

It belongs to the TRAFAC class translation factor GTPase superfamily. Classic translation factor GTPase family. IF-2 subfamily.

Its subcellular location is the cytoplasm. In terms of biological role, one of the essential components for the initiation of protein synthesis. Protects formylmethionyl-tRNA from spontaneous hydrolysis and promotes its binding to the 30S ribosomal subunits. Also involved in the hydrolysis of GTP during the formation of the 70S ribosomal complex. This is Translation initiation factor IF-2 from Escherichia coli O127:H6 (strain E2348/69 / EPEC).